Here is a 453-residue protein sequence, read N- to C-terminus: Probable glycine dehydrogenase (decarboxylating) subunit 1 (453 aa).

Belongs to the GcvP family. N-terminal subunit subfamily. The glycine cleavage system is composed of four proteins: P, T, L and H. In this organism, the P 'protein' is a heterodimer of two subunits.

It catalyses the reaction N(6)-[(R)-lipoyl]-L-lysyl-[glycine-cleavage complex H protein] + glycine + H(+) = N(6)-[(R)-S(8)-aminomethyldihydrolipoyl]-L-lysyl-[glycine-cleavage complex H protein] + CO2. The glycine cleavage system catalyzes the degradation of glycine. The P protein binds the alpha-amino group of glycine through its pyridoxal phosphate cofactor; CO(2) is released and the remaining methylamine moiety is then transferred to the lipoamide cofactor of the H protein. The sequence is that of Probable glycine dehydrogenase (decarboxylating) subunit 1 from Caulobacter sp. (strain K31).